Consider the following 355-residue polypeptide: Phosphoribosylformylglycinamidine cyclo-ligase (355 aa).

It belongs to the AIR synthase family.

The protein resides in the cytoplasm. The catalysed reaction is 2-formamido-N(1)-(5-O-phospho-beta-D-ribosyl)acetamidine + ATP = 5-amino-1-(5-phospho-beta-D-ribosyl)imidazole + ADP + phosphate + H(+). It functions in the pathway purine metabolism; IMP biosynthesis via de novo pathway; 5-amino-1-(5-phospho-D-ribosyl)imidazole from N(2)-formyl-N(1)-(5-phospho-D-ribosyl)glycinamide: step 2/2. The polypeptide is Phosphoribosylformylglycinamidine cyclo-ligase (Paraburkholderia xenovorans (strain LB400)).